The primary structure comprises 456 residues: RuvB-like 1 (456 aa).

Residue Lys2 forms a Glycyl lysine isopeptide (Lys-Gly) (interchain with G-Cter in SUMO2) linkage. 70 to 77 provides a ligand contact to ATP; the sequence is GPPGTGKT. Residue Lys225 forms a Glycyl lysine isopeptide (Lys-Gly) (interchain with G-Cter in SUMO1); alternate linkage. Lys225 participates in a covalent cross-link: Glycyl lysine isopeptide (Lys-Gly) (interchain with G-Cter in SUMO2); alternate. A Glycyl lysine isopeptide (Lys-Gly) (interchain with G-Cter in SUMO2) cross-link involves residue Lys445. Residue Lys453 is modified to N6-acetyllysine.

This sequence belongs to the RuvB family. As to quaternary structure, forms homohexameric rings. Can form a dodecamer with RUVBL2 made of two stacked hexameric rings; however, even though RUVBL1 and RUVBL2 are present in equimolar ratio, the oligomeric status of each hexamer is not known. Oligomerization may regulate binding to nucleic acids and conversely, binding to nucleic acids may affect the dodecameric assembly. Interaction of the complex with DHX34 results in conformational changes of the N-terminus of the RUVBL2 subunits, resulting in loss of nucleotide binding ability and ATP hydrolysis of the complex. Interacts with the transcriptional activation domain of MYC. Component of the RNA polymerase II holoenzyme complex. May also act to bridge the LEF1/TCF1-CTNNB1 complex and TBP. Component of the NuA4 histone acetyltransferase complex which contains the catalytic subunit KAT5/TIP60 and the subunits EP400, TRRAP/PAF400, BRD8/SMAP, EPC1, DMAP1/DNMAP1, RUVBL1/TIP49, RUVBL2, ING3, actin, ACTL6A/BAF53A, MORF4L1/MRG15, MORF4L2/MRGX, MRGBP, YEATS4/GAS41, VPS72/YL1 and MEAF6. The NuA4 complex interacts with MYC and the adenovirus E1A protein. RUVBL1 interacts with EP400. Component of a NuA4-related complex which contains EP400, TRRAP/PAF400, SRCAP, BRD8/SMAP, EPC1, DMAP1/DNMAP1, RUVBL1/TIP49, RUVBL2, actin, ACTL6A/BAF53A, VPS72 and YEATS4/GAS41. Component of the BAF53 complex, at least composed of ACTL6A/BAF53A, RUVBL1/TIP49, SMARCA2/BRM, and TRRAP/PAF400. Component of some MLL1/MLL complex, at least composed of the core components KMT2A/MLL1, ASH2L, HCFC1/HCF1, WDR5 and RBBP5, as well as the facultative components BACC1, CHD8, E2F6, HSP70, INO80C, KANSL1, LAS1L, MAX, MCRS1, MGA, MYST1/MOF, PELP1, PHF20, PRP31, RING2, RUVB1/TIP49A, RUVB2/TIP49B, SENP3, TAF1, TAF4, TAF6, TAF7, TAF9 and TEX10. Associates with alpha and gamma tubulins, particularly during metaphase and early anaphase. Interacts with NPAT. Component of the chromatin-remodeling INO80 complex; specifically part of a complex module associated with the helicase ATP-binding and the helicase C-terminal domain of INO80. Interacts with IGHMBP2. Interacts with OFD1. Interacts with HINT1. Component of a complex with USP49 and PSMC5. Component of a SWR1-like complex. Component of the R2TP complex composed at least of RUVBL1, RUVBL2, RPAP3 and PIHD1. Component of the PAQosome complex which is responsible for the biogenesis of several protein complexes and which consists of R2TP complex members RUVBL1, RUVBL2, RPAP3 and PIH1D1, URI complex members PFDN2, PFDN6, PDRG1, UXT and URI1 as well as ASDURF, POLR2E and DNAAF10/WDR92. Interacts with PIH1D1. Interacts with ITFG1. Interacts with WAC; WAC positively regulates MTOR activity by promoting the assembly of the TTT complex composed of TELO2, TTI1 and TTI2 and the RUVBL complex composed of RUVBL1 and RUVBL2 into the TTT-RUVBL complex which leads to the dimerization of the mTORC1 complex and its subsequent activation. The RUVBL1/RUVBL2 complex interacts with ZNHIT1 (via HIT-type zinc finger), ZNHIT3 (via HIT-type zinc finger), ZNHIT6 (via HIT-type zinc finger) and DDX59/ZNHIT5 (via HIT-type zinc finger) in the presence of ADP. Interacts with NOPCHAP1; the interaction is direct and disrupted upon ATP binding. Interacts with SMG1. Interacts with NOP2, NOP56 and NUFIP1. In terms of assembly, (Microbial infection) Interacts with Mumps L polymerase; this interaction regulates the viral transcription. Ubiquitously expressed with high expression in heart, skeletal muscle and testis.

The protein localises to the nucleus matrix. The protein resides in the nucleus. It localises to the nucleoplasm. It is found in the cytoplasm. Its subcellular location is the membrane. The protein localises to the cytoskeleton. The protein resides in the microtubule organizing center. It localises to the centrosome. It is found in the dynein axonemal particle. The enzyme catalyses ATP + H2O = ADP + phosphate + H(+). Its function is as follows. Possesses single-stranded DNA-stimulated ATPase and ATP-dependent DNA helicase (3' to 5') activity; hexamerization is thought to be critical for ATP hydrolysis and adjacent subunits in the ring-like structure contribute to the ATPase activity. Component of the NuA4 histone acetyltransferase complex which is involved in transcriptional activation of select genes principally by acetylation of nucleosomal histones H4 and H2A. This modification may both alter nucleosome-DNA interactions and promote interaction of the modified histones with other proteins which positively regulate transcription. This complex may be required for the activation of transcriptional programs associated with oncogene and proto-oncogene mediated growth induction, tumor suppressor mediated growth arrest and replicative senescence, apoptosis, and DNA repair. The NuA4 complex ATPase and helicase activities seem to be, at least in part, contributed by the association of RUVBL1 and RUVBL2 with EP400. NuA4 may also play a direct role in DNA repair when recruited to sites of DNA damage. Component of a SWR1-like complex that specifically mediates the removal of histone H2A.Z/H2AZ1 from the nucleosome. Proposed core component of the chromatin remodeling INO80 complex which exhibits DNA- and nucleosome-activated ATPase activity and catalyzes ATP-dependent nucleosome sliding. Plays an essential role in oncogenic transformation by MYC and also modulates transcriptional activation by the LEF1/TCF1-CTNNB1 complex. Essential for cell proliferation. May be able to bind plasminogen at cell surface and enhance plasminogen activation. This chain is RuvB-like 1, found in Homo sapiens (Human).